The primary structure comprises 348 residues: Sulfate/thiosulfate import ATP-binding protein CysA (348 aa).

The region spanning 3–237 (IEIRNITKSF…PATPFVCQFI (235 aa)) is the ABC transporter domain. 35–42 (GPSGCGKT) contributes to the ATP binding site.

This sequence belongs to the ABC transporter superfamily. Sulfate/tungstate importer (TC 3.A.1.6) family. The complex is composed of two ATP-binding proteins (CysA), two transmembrane proteins (CysT and CysW) and a solute-binding protein (CysP).

It localises to the cell inner membrane. The enzyme catalyses sulfate(out) + ATP + H2O = sulfate(in) + ADP + phosphate + H(+). It catalyses the reaction thiosulfate(out) + ATP + H2O = thiosulfate(in) + ADP + phosphate + H(+). Part of the ABC transporter complex CysAWTP involved in sulfate/thiosulfate import. Responsible for energy coupling to the transport system. The protein is Sulfate/thiosulfate import ATP-binding protein CysA of Methylococcus capsulatus (strain ATCC 33009 / NCIMB 11132 / Bath).